Consider the following 299-residue polypeptide: Putative syntaxin-2 (299 aa).

Residues 1–270 (MRDRLNEFQS…SAMRKKICVA (270 aa)) lie on the Cytoplasmic side of the membrane. Residues 112–146 (EKRMRQNQLELLKDNLNKLINLFNETHQDYKSRVS) adopt a coiled-coil conformation. Positions 193–255 (YEDVKKRHGE…KQGSANVKTA (63 aa)) constitute a t-SNARE coiled-coil homology domain. The helical; Anchor for type IV membrane protein transmembrane segment at 271–291 (AILITILLILIIVAIILAVVL) threads the bilayer. Residues 292 to 299 (SRGNNNNK) lie on the Extracellular side of the membrane.

It belongs to the syntaxin family.

The protein resides in the membrane. Potentially involved in docking of synaptic vesicles at presynaptic active zones. The polypeptide is Putative syntaxin-2 (syx-2) (Caenorhabditis elegans).